The sequence spans 469 residues: ATP synthase subunit beta (469 aa).

155 to 162 (GGAGVGKT) is an ATP binding site.

The protein belongs to the ATPase alpha/beta chains family. In terms of assembly, F-type ATPases have 2 components, CF(1) - the catalytic core - and CF(0) - the membrane proton channel. CF(1) has five subunits: alpha(3), beta(3), gamma(1), delta(1), epsilon(1). CF(0) has three main subunits: a(1), b(2) and c(9-12). The alpha and beta chains form an alternating ring which encloses part of the gamma chain. CF(1) is attached to CF(0) by a central stalk formed by the gamma and epsilon chains, while a peripheral stalk is formed by the delta and b chains.

The protein localises to the cell inner membrane. It catalyses the reaction ATP + H2O + 4 H(+)(in) = ADP + phosphate + 5 H(+)(out). Produces ATP from ADP in the presence of a proton gradient across the membrane. The catalytic sites are hosted primarily by the beta subunits. This is ATP synthase subunit beta from Thermosipho melanesiensis (strain DSM 12029 / CIP 104789 / BI429).